The primary structure comprises 443 residues: Tryptophan synthase beta chain (443 aa).

Lysine 110 carries the N6-(pyridoxal phosphate)lysine modification.

This sequence belongs to the TrpB family. Tetramer of two alpha and two beta chains. Pyridoxal 5'-phosphate serves as cofactor.

It carries out the reaction (1S,2R)-1-C-(indol-3-yl)glycerol 3-phosphate + L-serine = D-glyceraldehyde 3-phosphate + L-tryptophan + H2O. It participates in amino-acid biosynthesis; L-tryptophan biosynthesis; L-tryptophan from chorismate: step 5/5. Its function is as follows. The beta subunit is responsible for the synthesis of L-tryptophan from indole and L-serine. In Thermococcus onnurineus (strain NA1), this protein is Tryptophan synthase beta chain.